Consider the following 222-residue polypeptide: Cytidylate kinase (222 aa).

11-19 provides a ligand contact to ATP; the sequence is GPAGAGKST.

This sequence belongs to the cytidylate kinase family. Type 1 subfamily.

Its subcellular location is the cytoplasm. The catalysed reaction is CMP + ATP = CDP + ADP. It carries out the reaction dCMP + ATP = dCDP + ADP. The protein is Cytidylate kinase of Desulforamulus reducens (strain ATCC BAA-1160 / DSM 100696 / MI-1) (Desulfotomaculum reducens).